The following is a 314-amino-acid chain: Methionyl-tRNA formyltransferase (314 aa).

A (6S)-5,6,7,8-tetrahydrofolate-binding site is contributed by 112-115 (SLLP).

Belongs to the Fmt family.

The catalysed reaction is L-methionyl-tRNA(fMet) + (6R)-10-formyltetrahydrofolate = N-formyl-L-methionyl-tRNA(fMet) + (6S)-5,6,7,8-tetrahydrofolate + H(+). Functionally, attaches a formyl group to the free amino group of methionyl-tRNA(fMet). The formyl group appears to play a dual role in the initiator identity of N-formylmethionyl-tRNA by promoting its recognition by IF2 and preventing the misappropriation of this tRNA by the elongation apparatus. The chain is Methionyl-tRNA formyltransferase from Tolumonas auensis (strain DSM 9187 / NBRC 110442 / TA 4).